We begin with the raw amino-acid sequence, 674 residues long: Death-associated protein kinase related (674 aa).

The Protein kinase domain maps to 37 to 295 (EVEQTPFARG…ATGCLDHIWL (259 aa)). Residues 43–51 (FARGKFAAV) and K66 each bind ATP. D160 serves as the catalytic Proton acceptor. Disordered stretches follow at residues 308–388 (QPQS…GGSI), 412–440 (TLTSNSNGHVHKPTQIVTPTRRASDSDKE), 511–583 (DSSG…TSGS), and 614–650 (TSSASSSNSSSGKSTSAAHHLHHHHMHHHHHHHHHHV). Acidic residues predominate over residues 312–343 (DAEEEEEEDVDDDVEDEEEEEQVEEEEEETQN). The span at 352 to 363 (PQQQQQPVQQHQ) shows a compositional bias: low complexity. Basic residues predominate over residues 373–382 (KPTHNGHHRA). A phosphoserine mark is found at S384, S387, S435, S437, and S521. Positions 512-525 (SSGSAVARRSGGAV) are enriched in low complexity. Polar residues-rich tracts occupy residues 526-541 (TSSSGLHSPTTTSVRL) and 555-564 (YKKQTSQNGC). Low complexity-rich tracts occupy residues 565–583 (SSTSNPSSSPGSSPTTSGS) and 614–631 (TSSASSSNSSSGKSTSAA). Residues 632–650 (HHLHHHHMHHHHHHHHHHV) show a composition bias toward basic residues.

Belongs to the protein kinase superfamily. Ser/Thr protein kinase family.

It carries out the reaction L-seryl-[protein] + ATP = O-phospho-L-seryl-[protein] + ADP + H(+). The catalysed reaction is L-threonyl-[protein] + ATP = O-phospho-L-threonyl-[protein] + ADP + H(+). The polypeptide is Death-associated protein kinase related (Drak) (Drosophila melanogaster (Fruit fly)).